A 306-amino-acid polypeptide reads, in one-letter code: D-alanine--D-alanine ligase (306 aa).

The ATP-grasp domain occupies 101–303 (KQVWQAVGLP…FSQLVVKILE (203 aa)). Residue 134–189 (FTHLGLPLIVKPSREGSSVGMSKVNTLSELPAALEEAFRHDDDILVEKWLSGPEYT) coordinates ATP. The Mg(2+) site is built by Asp-257, Glu-270, and Asn-272.

This sequence belongs to the D-alanine--D-alanine ligase family. The cofactor is Mg(2+). Requires Mn(2+) as cofactor.

It is found in the cytoplasm. It catalyses the reaction 2 D-alanine + ATP = D-alanyl-D-alanine + ADP + phosphate + H(+). It functions in the pathway cell wall biogenesis; peptidoglycan biosynthesis. Cell wall formation. The polypeptide is D-alanine--D-alanine ligase (Pectobacterium carotovorum subsp. carotovorum (strain PC1)).